The sequence spans 1165 residues: Activity-dependent neuroprotector homeobox protein 2 (1165 aa).

Residues 73–96 form a C2H2-type 1 zinc finger; that stretch reads YCCSLCRYSTKVLTSLKNHLHRYH. The C2H2-type 2; degenerate zinc-finger motif lies at 106-128; the sequence is IPCPNCPFSSQPRVVGKHFRMFH. Residue K146 forms a Glycyl lysine isopeptide (Lys-Gly) (interchain with G-Cter in SUMO2) linkage. The segment at 155–178 adopts a C2H2-type 3; degenerate zinc-finger fold; sequence FTCLKCNFSNTLYYSMKKHVLVAH. Residues 215–240 form a C2H2-type 4 zinc finger; it reads YYCKKCSAIASSQDALMYHILTSDAH. The segment covering 303-318 has biased composition (low complexity); the sequence is SGTVQSVTVTPGTSGS. A disordered region spans residues 303-327; that stretch reads SGTVQSVTVTPGTSGSLTHSPPTTA. The segment at 696-718 adopts a C2H2-type 5; degenerate zinc-finger fold; that stretch reads KTCPVCNELFPSNVYQVHMEVAH. The C2H2-type 6; degenerate zinc-finger motif lies at 724-746; sequence QLCQVCNELFPANVYQVHMEVAH. Residues 777–798 form a C2H2-type 7; degenerate zinc finger; it reads VRCLSCKCLVSQEELMHHLLMH. 2 C2H2-type zinc fingers span residues 800 to 823 and 905 to 935; these read LGCL…RTKH and LTCP…PTVH. The tract at residues 1005–1068 is disordered; it reads PVKRKLPEGH…SGPSEDSLQA (64 aa). Residues K1009 and K1048 each participate in a glycyl lysine isopeptide (Lys-Gly) (interchain with G-Cter in SUMO2) cross-link. Residues 1009-1024 show a composition bias toward basic and acidic residues; that stretch reads KLPEGHLGPEDQRDGE. A DNA-binding region (homeobox) is located at residues 1090-1132; sequence DYFHRRPYPSRKEVELLSSLLWVWKIDVASFFGKRRYICMKAI.

The protein belongs to the krueppel C2H2-type zinc-finger protein family. May interact with SMARCA4/BRG1. Expressed widely, with the highest level in the brain.

It localises to the nucleus. May be involved in transcriptional regulation. May play a role in neuronal function; perhaps involved in protection of brain tissues from oxidative stress. May be involved in erythroid differentiation. In Mus musculus (Mouse), this protein is Activity-dependent neuroprotector homeobox protein 2 (Adnp2).